A 122-amino-acid polypeptide reads, in one-letter code: MSNRTLRVNELIQRELSEILRKRYQSEATAITITELRVAPDLRDARVFVSIVGSAEEQDEKLRWLRAHAGELRYEVGRRIVLKYLPKFEYVLDHSPEKSARILQVLDEIDRQTPPRPEAEND.

This sequence belongs to the RbfA family. As to quaternary structure, monomer. Binds 30S ribosomal subunits, but not 50S ribosomal subunits or 70S ribosomes.

Its subcellular location is the cytoplasm. Functionally, one of several proteins that assist in the late maturation steps of the functional core of the 30S ribosomal subunit. Associates with free 30S ribosomal subunits (but not with 30S subunits that are part of 70S ribosomes or polysomes). Required for efficient processing of 16S rRNA. May interact with the 5'-terminal helix region of 16S rRNA. The chain is Ribosome-binding factor A from Opitutus terrae (strain DSM 11246 / JCM 15787 / PB90-1).